The chain runs to 592 residues: MSKIHTDLKKIDPITVQVVLGSLENVAVEMGHKLARMSYSSIIRESEDFGCALVDVRGQQLCESSHSTPLQSGPIPGYIKGIREIMEDRNDTFNQGDVIMHNSPYHGASHGPDVGFCIPVFYKDELIGFSVTTAHHLDIGSSTPGSCGIVDAVDAYAEGLQFKAIKVYDQGVKNRYVWDILKDNIRAPKLVVGDMEAQIAAARIGAQRYIEIIEKYGLDTVQAASEELMNYSEKMMRDAIKKLPDGEYTAEGFLDGYLDSDDPAKKDLRINVTVKVDGSDLTVDLTGTSPQVTDKPINMPLLGTVDIAIYLTLRSILLDSTVYGNFPQNSGLIRPIKIVAPKGTLCNPIFPAPTIARFNSGNAVADTLMKALAQVVPHQVSAGVGNLQVVAFSGQSNENYWVYMDIMEGSYGGRYGKDGMDAVDTLYANTRNNPIEDIESHYPLRVNRYELRDNDSAPGKWRGGIGSIREVSFLADGSFSVEADGHKYAPWGFDDGQDGYVGSLSIRDNETNELVQLPSKLPNRHAQSGSTIQLVGPCGGGYGNPLEREPEKVLSDYLDGFITKEKALVEYGVTITDSEEIDYEKTNELRKV.

It belongs to the HyuB family. May form a complex with HyuA.

In terms of biological role, involved in the asymmetric conversion of racemic 5-substituted hydantoins to the corresponding L-amino acids. HyuA and HyuB are both required for the conversion of D- and L-5-substituted hydantoins to corresponding N-carbamoyl-D- and N-carbamoyl-L-amino acids, respectively. This chain is Putative D-/L-hydantoinase subunit B, found in Pseudomonas sp. (strain NS671).